The primary structure comprises 473 residues: Hyaluronidase-2 (473 aa).

The signal sequence occupies residues 1-20 (MRAGPGPTVTLALVLAVSWA). 2 disulfide bridges follow: Cys47/Cys340 and Cys211/Cys227. 2 N-linked (GlcNAc...) asparagine glycosylation sites follow: Asn74 and Asn103. The active-site Proton donor is the Glu135. Asn357 carries N-linked (GlcNAc...) asparagine glycosylation. One can recognise an EGF-like domain in the interval 361–439 (ATQYCSRAQC…YLGWSGEQCQ (79 aa)). Intrachain disulfides connect Cys365–Cys376, Cys370–Cys427, and Cys429–Cys438. Gly448 carries the GPI-anchor amidated glycine lipid modification. A propeptide spans 449-473 (ASEAWAGSHLTSLLALAALAFTWTL) (removed in mature form).

Belongs to the glycosyl hydrolase 56 family. As to quaternary structure, interacts with MST1R. In terms of tissue distribution, widely expressed (at protein level).

The protein resides in the cell membrane. The catalysed reaction is Random hydrolysis of (1-&gt;4)-linkages between N-acetyl-beta-D-glucosamine and D-glucuronate residues in hyaluronate.. Functionally, catalyzes hyaluronan degradation into small fragments that are endocytosed and degraded in lysosomes by HYAL1 and exoglycosidases. Essential for the breakdown of extracellular matrix hyaluronan. In Homo sapiens (Human), this protein is Hyaluronidase-2 (HYAL2).